A 220-amino-acid chain; its full sequence is Aklanonic acid methyltransferase DauC (220 aa).

This sequence belongs to the methyltransferase superfamily. DnrC family. Homodimer.

The enzyme catalyses aklanonate + S-adenosyl-L-methionine = methyl aklanonate + S-adenosyl-L-homocysteine. It functions in the pathway antibiotic biosynthesis; daunorubicin biosynthesis. Its pathway is antibiotic biosynthesis; carminomycin biosynthesis. It participates in antibiotic biosynthesis; rhodomycin biosynthesis. The protein operates within antibiotic biosynthesis; aclacinomycin biosynthesis. Its function is as follows. Involved in the biosynthesis of aklavinone which is an important precursor common to the formation of the clinically significant anthracyclines such as carminomycin, daunorubicin (daunomycin), rhodomycin, aclacinomycin T (aklavin) and aclacinomycin A (aclarubicin). These compounds are aromatic polyketide antibiotics that exhibit high cytotoxicity and are widely applied in the chemotherapy of a variety of cancers. Catalyzes the methyl esterification of aklanonic acid to yield aklanonic acid methyl ester. This is Aklanonic acid methyltransferase DauC (dauC) from Streptomyces sp. (strain C5).